The following is a 1444-amino-acid chain: DNA polymerase III PolC-type (1444 aa).

The disordered stretch occupies residues 196-218; that stretch reads EAVQVMQKRQAEGQNGNSSAAPL. The segment covering 207–216 has biased composition (polar residues); sequence EGQNGNSSAA. Residues 428–584 enclose the Exonuclease domain; sequence YCVFDVETTG…FDAEATAYLA (157 aa).

The protein belongs to the DNA polymerase type-C family. PolC subfamily.

It is found in the cytoplasm. It carries out the reaction DNA(n) + a 2'-deoxyribonucleoside 5'-triphosphate = DNA(n+1) + diphosphate. Required for replicative DNA synthesis. This DNA polymerase also exhibits 3' to 5' exonuclease activity. The sequence is that of DNA polymerase III PolC-type from Listeria welshimeri serovar 6b (strain ATCC 35897 / DSM 20650 / CCUG 15529 / CIP 8149 / NCTC 11857 / SLCC 5334 / V8).